The primary structure comprises 434 residues: Exopolygalacturonase X-1 (434 aa).

The first 22 residues, 1-22 (MKLSHLLTSAVSVLSLGLTVEG), serve as a signal peptide directing secretion. Asn-113, Asn-129, and Asn-199 each carry an N-linked (GlcNAc...) asparagine glycan. The stretch at 231-252 (SKNIVIQNSVINNGDDCVSFKP) is one PbH1 1 repeat. Asp-245 acts as the Proton donor in catalysis. Residues Cys-247 and Cys-264 are joined by a disulfide bond. 2 N-linked (GlcNAc...) asparagine glycosylation sites follow: Asn-253 and Asn-265. The stretch at 254-274 (STEILVQNLYCNGSHGISVGS) is one PbH1 2 repeat. The active site involves His-268. Asn-292, Asn-297, Asn-329, Asn-354, and Asn-364 each carry an N-linked (GlcNAc...) asparagine glycan. One copy of the PbH1 3 repeat lies at 327-348 (VSNITYEDMYIENVDWAIEITQ). The PbH1 4 repeat unit spans residues 362 to 405 (PSNLTISDVYISNMYGTTSSARDPNIGTIVCSSPDVCSNIYVEN). A disulfide bridge connects residues Cys-392 and Cys-398. N-linked (GlcNAc...) asparagine glycosylation is found at Asn-423 and Asn-430.

The protein belongs to the glycosyl hydrolase 28 family.

The protein resides in the secreted. It carries out the reaction [(1-&gt;4)-alpha-D-galacturonosyl](n) + H2O = alpha-D-galacturonate + [(1-&gt;4)-alpha-D-galacturonosyl](n-1). Functionally, specific in hydrolyzing the terminal glycosidic bond of polygalacturonic acid and oligogalacturonates. The polypeptide is Exopolygalacturonase X-1 (pgaX-1) (Emericella nidulans (strain FGSC A4 / ATCC 38163 / CBS 112.46 / NRRL 194 / M139) (Aspergillus nidulans)).